The primary structure comprises 419 residues: UDP-N-acetylglucosamine 1-carboxyvinyltransferase (419 aa).

K22–N23 serves as a coordination point for phosphoenolpyruvate. R91 contacts UDP-N-acetyl-alpha-D-glucosamine. C115 serves as the catalytic Proton donor. Residue C115 is modified to 2-(S-cysteinyl)pyruvic acid O-phosphothioketal. Residues R120–L124, K160–V163, D305, and I327 each bind UDP-N-acetyl-alpha-D-glucosamine.

The protein belongs to the EPSP synthase family. MurA subfamily.

It localises to the cytoplasm. It catalyses the reaction phosphoenolpyruvate + UDP-N-acetyl-alpha-D-glucosamine = UDP-N-acetyl-3-O-(1-carboxyvinyl)-alpha-D-glucosamine + phosphate. It functions in the pathway cell wall biogenesis; peptidoglycan biosynthesis. Its function is as follows. Cell wall formation. Adds enolpyruvyl to UDP-N-acetylglucosamine. The sequence is that of UDP-N-acetylglucosamine 1-carboxyvinyltransferase from Klebsiella pneumoniae (strain 342).